A 472-amino-acid chain; its full sequence is Adenosylhomocysteinase (472 aa).

Positions 62, 137, and 197 each coordinate substrate. 198-200 (TTT) is a binding site for NAD(+). 2 residues coordinate substrate: Lys-227 and Asp-231. Residues Asn-232, 261–266 (GYGDVG), Glu-284, Asn-319, 340–342 (IGH), and Asn-385 contribute to the NAD(+) site.

Belongs to the adenosylhomocysteinase family. NAD(+) serves as cofactor.

It localises to the cytoplasm. The enzyme catalyses S-adenosyl-L-homocysteine + H2O = L-homocysteine + adenosine. The protein operates within amino-acid biosynthesis; L-homocysteine biosynthesis; L-homocysteine from S-adenosyl-L-homocysteine: step 1/1. Its function is as follows. May play a key role in the regulation of the intracellular concentration of adenosylhomocysteine. This is Adenosylhomocysteinase from Bordetella bronchiseptica (strain ATCC BAA-588 / NCTC 13252 / RB50) (Alcaligenes bronchisepticus).